The primary structure comprises 350 residues: Hydroxymethylglutaryl-CoA synthase (350 aa).

Glu-83 functions as the Proton donor/acceptor in the catalytic mechanism. Residue Cys-115 is the Acyl-thioester intermediate of the active site. The (3S)-3-hydroxy-3-methylglutaryl-CoA site is built by Cys-115 and Thr-156. Arg-204 lines the CoA pocket. (3S)-3-hydroxy-3-methylglutaryl-CoA contacts are provided by Thr-206 and His-239. His-239 functions as the Proton donor/acceptor in the catalytic mechanism. Lys-244 is a CoA binding site. (3S)-3-hydroxy-3-methylglutaryl-CoA is bound by residues Asn-271 and Ser-301.

This sequence belongs to the thiolase-like superfamily. Archaeal HMG-CoA synthase family. In terms of assembly, interacts with acetoacetyl-CoA thiolase that catalyzes the precedent step in the pathway and with a DUF35 protein. The acetoacetyl-CoA thiolase/HMG-CoA synthase complex channels the intermediate via a fused CoA-binding site, which allows for efficient coupling of the endergonic thiolase reaction with the exergonic HMGCS reaction.

The enzyme catalyses acetoacetyl-CoA + acetyl-CoA + H2O = (3S)-3-hydroxy-3-methylglutaryl-CoA + CoA + H(+). It participates in metabolic intermediate biosynthesis; (R)-mevalonate biosynthesis; (R)-mevalonate from acetyl-CoA: step 2/3. Functionally, catalyzes the condensation of acetyl-CoA with acetoacetyl-CoA to form 3-hydroxy-3-methylglutaryl-CoA (HMG-CoA). Functions in the mevalonate (MVA) pathway leading to isopentenyl diphosphate (IPP), a key precursor for the biosynthesis of isoprenoid compounds that are building blocks of archaeal membrane lipids. This chain is Hydroxymethylglutaryl-CoA synthase, found in Thermococcus gammatolerans (strain DSM 15229 / JCM 11827 / EJ3).